The following is a 141-amino-acid chain: Large ribosomal subunit protein uL11 (141 aa).

It belongs to the universal ribosomal protein uL11 family. As to quaternary structure, part of the ribosomal stalk of the 50S ribosomal subunit. Interacts with L10 and the large rRNA to form the base of the stalk. L10 forms an elongated spine to which L12 dimers bind in a sequential fashion forming a multimeric L10(L12)X complex. One or more lysine residues are methylated.

Its function is as follows. Forms part of the ribosomal stalk which helps the ribosome interact with GTP-bound translation factors. This chain is Large ribosomal subunit protein uL11, found in Tropheryma whipplei (strain TW08/27) (Whipple's bacillus).